The chain runs to 379 residues: Protein RecA (379 aa).

Residue 79–86 (GPESSGKT) coordinates ATP.

The protein belongs to the RecA family.

It is found in the cytoplasm. Its function is as follows. Can catalyze the hydrolysis of ATP in the presence of single-stranded DNA, the ATP-dependent uptake of single-stranded DNA by duplex DNA, and the ATP-dependent hybridization of homologous single-stranded DNAs. It interacts with LexA causing its activation and leading to its autocatalytic cleavage. The sequence is that of Protein RecA from Streptococcus thermophilus.